Here is a 653-residue protein sequence, read N- to C-terminus: UvrABC system protein C (653 aa).

Positions N44 to V122 constitute a GIY-YIG domain. A UVR domain is found at S232–V267.

It belongs to the UvrC family. Interacts with UvrB in an incision complex.

Its subcellular location is the cytoplasm. Functionally, the UvrABC repair system catalyzes the recognition and processing of DNA lesions. UvrC both incises the 5' and 3' sides of the lesion. The N-terminal half is responsible for the 3' incision and the C-terminal half is responsible for the 5' incision. This is UvrABC system protein C from Chelativorans sp. (strain BNC1).